The sequence spans 1337 residues: Rho GTPase-activating protein 29 (1337 aa).

Residues 1 to 13 (MFRQGSNSGNKRM) show a composition bias toward polar residues. Disordered regions lie at residues 1 to 20 (MFRQ…ARLS), 369 to 397 (REEY…LEKK), 513 to 551 (SSKT…ADEV), and 564 to 654 (ERRS…TGLS). Residues 225–488 (EQVDLLLLKN…QAKKYEPGQR (264 aa)) enclose the F-BAR domain. Positions 326-443 (LLARKNDLDK…SEILAQIRKL (118 aa)) form a coiled coil. The segment covering 369–384 (REEYEKARSSTSRTEE) has biased composition (basic and acidic residues). 2 stretches are compositionally biased toward polar residues: residues 525 to 545 (QNST…SMDN) and 568 to 579 (NSSIDMQVPRTQ). Low complexity predominate over residues 596 to 613 (CSDSESAGGSSESRSMDS). The segment at 676-723 (AHTHKLRKLRAPSKCRECDSLVVFHGAECEECSLACHKKCLETLAIQC) adopts a Phorbol-ester/DAG-type zinc-finger fold. Residues 737 to 950 (IDFAQVVKNS…LLIKHHQMIF (214 aa)) form the Rho-GAP domain. Over residues 960-973 (TSPTVSQASFGSSI) the composition is skewed to polar residues. Disordered regions lie at residues 960-983 (TSPT…LSRH), 1016-1066 (MKTG…AKPV), 1083-1114 (SRNT…TNFY), 1149-1210 (PPSG…KPSD), and 1273-1337 (TVSR…AHFV). Residues 974–983 (QDKESKLSRH) are compositionally biased toward basic and acidic residues. Residues 1083 to 1092 (SRNTVEHDHS) are compositionally biased toward basic and acidic residues. Composition is skewed to polar residues over residues 1161 to 1177 (MASQ…SQSG) and 1295 to 1310 (VTLS…TEEL). A compositionally biased stretch (basic and acidic residues) spans 1325–1337 (RMQELEHREAHFV).

Functionally, GTPase activator for the Rho-type GTPases by converting them to an inactive GDP-bound state. Has strong activity toward RHOA, and weaker activity toward RAC1 and CDC42. The chain is Rho GTPase-activating protein 29 (arhgap29) from Danio rerio (Zebrafish).